The chain runs to 423 residues: Tegument protein UL43 (423 aa).

Over residues 1–12 (MEKTPAETTAVS) the composition is skewed to polar residues. Residues 1–46 (MEKTPAETTAVSAGNVPRDSIPCITNVSADTRGRTRPSRPATVPQR) form a disordered region.

The protein belongs to the herpesviridae US22 family.

It is found in the virion tegument. The protein is Tegument protein UL43 (UL43) of Homo sapiens (Human).